Reading from the N-terminus, the 267-residue chain is Integral membrane protein 2C (267 aa).

Residue Thr-37 is modified to Phosphothreonine. The helical; Signal-anchor for type II membrane protein transmembrane segment at Val-55–Ala-75 threads the bilayer. The 95-residue stretch at Phe-136–Leu-230 folds into the BRICHOS domain. A disulfide bond links Cys-163 and Cys-222. N-linked (GlcNAc...) asparagine glycosylation is present at Asn-169.

Belongs to the ITM2 family. In terms of assembly, interacts with BACE1. Interacts with APP. Interacts with STMN2. Type I membrane-bound, as well as soluble, furin has a pre-eminent role in ITM2C proteolytic processing. PCSK7 and PCSK5 may also be involved although to a lesser extent. The soluble form of PCSK7 is incapable of processing ITM2C. Fails to undergo shedding by ADAM10 and intramembrane cleavage by SPPL2B. In terms of tissue distribution, high levels in the brain, specifically in the cerebral cortex, medulla, amygdala, hippocampus, thalamus, caudate nucleus, cerebellum, olfactory lobe and spinal cord. Very low levels in other organs.

It is found in the lysosome membrane. The protein resides in the cell membrane. In terms of biological role, negative regulator of amyloid-beta peptide production. May inhibit the processing of APP by blocking its access to alpha- and beta-secretase. Binding to the beta-secretase-cleaved APP C-terminal fragment is negligible, suggesting that ITM2C is a poor gamma-secretase cleavage inhibitor. May play a role in TNF-induced cell death and neuronal differentiation. This Homo sapiens (Human) protein is Integral membrane protein 2C (ITM2C).